Reading from the N-terminus, the 207-residue chain is Holliday junction branch migration complex subunit RuvA (207 aa).

A domain I region spans residues 1–64 (MIGRLTGILA…ETSQQLFGFS (64 aa)). The interval 65–142 (SQQDRELFRM…ALDTTPSEHS (78 aa)) is domain II. Residues 143 to 157 (PTGEGAGIVRVDPVI) are flexible linker. Residues 158–207 (NTNVIIADAESALIGLGYKPTEAAKAVSAAYNDTITTSEDLIRAALKGMI) form a domain III region.

The protein belongs to the RuvA family. Homotetramer. Forms an RuvA(8)-RuvB(12)-Holliday junction (HJ) complex. HJ DNA is sandwiched between 2 RuvA tetramers; dsDNA enters through RuvA and exits via RuvB. An RuvB hexamer assembles on each DNA strand where it exits the tetramer. Each RuvB hexamer is contacted by two RuvA subunits (via domain III) on 2 adjacent RuvB subunits; this complex drives branch migration. In the full resolvosome a probable DNA-RuvA(4)-RuvB(12)-RuvC(2) complex forms which resolves the HJ.

The protein resides in the cytoplasm. Its function is as follows. The RuvA-RuvB-RuvC complex processes Holliday junction (HJ) DNA during genetic recombination and DNA repair, while the RuvA-RuvB complex plays an important role in the rescue of blocked DNA replication forks via replication fork reversal (RFR). RuvA specifically binds to HJ cruciform DNA, conferring on it an open structure. The RuvB hexamer acts as an ATP-dependent pump, pulling dsDNA into and through the RuvAB complex. HJ branch migration allows RuvC to scan DNA until it finds its consensus sequence, where it cleaves and resolves the cruciform DNA. The protein is Holliday junction branch migration complex subunit RuvA of Saccharophagus degradans (strain 2-40 / ATCC 43961 / DSM 17024).